Here is a 408-residue protein sequence, read N- to C-terminus: MDDTAPIDWKRNLYIAWLGCFFTGAAFSLVMPFLSLYVEQLGIQGHEALNLWSGVVFSITFLFSAIASPFWGRLADRKGRKLMLLRSALGMAIVMALMGLVQNIWQFLLLRAALGVLGGFVPNANALIAIQVPRNRSGWALGTLSTGAVGGALLGPLLGGYLADTFGLRPVFFITAVVLFICFLVTFFFIRERIEPVREKGMLSGRQVMVSLQNPHLVMSLFVTTLIIQVATGSVAPILTLYVRELAGQTDNLAFISGAIAAIPGVSALLSAPRLGKLGDKIGPERILVAMLILSVLLLIPMAFVQSPWQLAVLRFLLGAADGALLPAVQTLLIYHSSHQVAGRIFSYNQSFRDVGNVTGPLLGASVSASFGFRAVFLVTASVVMINAFYSWLSLRRKSNRELVSEAE.

The next 10 helical transmembrane spans lie at 13–33 (LYIA…VMPF), 51–71 (LWSG…SPFW), 89–109 (LGMA…QFLL), 112–132 (AALG…AIQV), 138–158 (GWAL…GPLL), 170–190 (PVFF…FFFI), 221–241 (LFVT…ILTL), 253–273 (LAFI…LSAP), 287–307 (ILVA…FVQS), and 375–395 (AVFL…WLSL).

This sequence belongs to the major facilitator superfamily. DHA1 family. MdtG (TC 2.A.1.2.20) subfamily.

It localises to the cell inner membrane. This Dickeya zeae (strain Ech586) (Dickeya dadantii (strain Ech586)) protein is Multidrug resistance protein MdtG.